The following is a 315-amino-acid chain: Uracil-DNA glycosylase (315 aa).

Low complexity predominate over residues 35-80; that stretch reads AAAAAPAGAGAGASKPARPPAAARPAKGTPAASAATTATGADASAP. Residues 35 to 88 form a disordered region; sequence AAAAAPAGAGAGASKPARPPAAARPAKGTPAASAATTATGADASAPAPDPGAPT. Catalysis depends on Asp158, which acts as the Proton acceptor.

The protein belongs to the uracil-DNA glycosylase (UDG) superfamily. UNG family.

The protein resides in the host nucleus. The enzyme catalyses Hydrolyzes single-stranded DNA or mismatched double-stranded DNA and polynucleotides, releasing free uracil.. Excises uracil residues from the DNA which can arise as a result of misincorporation of dUMP residues by DNA polymerase or deamination of cytosines. Therefore may reduce deleterious uracil incorporation into the viral genome, particularly in terminally differentiated cells which lack DNA repair enzymes. This chain is Uracil-DNA glycosylase (UL2), found in Suid herpesvirus 1 (strain Indiana-Funkhauser / Becker) (SuHV-1).